We begin with the raw amino-acid sequence, 59 residues long: Chromatin protein Cren7 (59 aa).

The protein belongs to the Cren7 family. Monomer. Methylated at multiple sites, to varying extents.

It is found in the chromosome. The protein resides in the cytoplasm. In terms of biological role, a chromatin protein, binds double-stranded DNA without sequence specificity. Constrains negative DNA supercoils. This is Chromatin protein Cren7 from Sulfolobus acidocaldarius (strain ATCC 33909 / DSM 639 / JCM 8929 / NBRC 15157 / NCIMB 11770).